The sequence spans 216 residues: Thymidine kinase (216 aa).

ATP is bound by residues 9–16 (GPMDSGKS) and 86–89 (DEAQ). The active-site Proton acceptor is Glu87.

It belongs to the thymidine kinase family. As to quaternary structure, homotetramer.

It is found in the cytoplasm. It catalyses the reaction thymidine + ATP = dTMP + ADP + H(+). The protein is Thymidine kinase of Cutibacterium acnes (strain DSM 16379 / KPA171202) (Propionibacterium acnes).